Here is a 133-residue protein sequence, read N- to C-terminus: Minor capsid protein VP2 (133 aa).

The protein belongs to the vesivirus VP2 protein family. In terms of assembly, homooligomer. The portal-like structure consists in 12 copies of VP2. Interacts with capsid protein VP1.

Its subcellular location is the virion. The protein localises to the host cytoplasm. Functionally, minor structural protein that forms a portal-like structure at a unique three-fold axis of symmetry, following binding to the host receptor. The channel formed by VP2 may allow the delivery of the viral genome through the host endosomal membrane. The chain is Minor capsid protein VP2 from Canis lupus familiaris (Dog).